The chain runs to 352 residues: DNA integrity scanning protein DisA (352 aa).

Residues 3 to 143 form the DAC domain; sequence DERIVLALKS…FKYSLSEVSV (141 aa). ATP is bound by residues Gly-70, Leu-88, and 101-105; that span reads IRHRT.

This sequence belongs to the DisA family. As to quaternary structure, homooctamer. Mg(2+) serves as cofactor.

It carries out the reaction 2 ATP = 3',3'-c-di-AMP + 2 diphosphate. Its function is as follows. Participates in a DNA-damage check-point that is active prior to asymmetric division when DNA is damaged. DisA forms globular foci that rapidly scan along the chromosomes during sporulation, searching for lesions. When a lesion is present, DisA pauses at the lesion site. This triggers a cellular response that culminates in a temporary block in sporulation initiation. Functionally, also has diadenylate cyclase activity, catalyzing the condensation of 2 ATP molecules into cyclic di-AMP (c-di-AMP). c-di-AMP acts as a signaling molecule that couples DNA integrity with progression of sporulation. The rise in c-di-AMP level generated by DisA while scanning the chromosome, operates as a positive signal that advances sporulation; upon encountering a lesion, the DisA focus arrests at the damaged site and halts c-di-AMP synthesis. The polypeptide is DNA integrity scanning protein DisA (Carboxydothermus hydrogenoformans (strain ATCC BAA-161 / DSM 6008 / Z-2901)).